A 187-amino-acid chain; its full sequence is Ribonuclease HII (187 aa).

The RNase H type-2 domain occupies 1–187 (MICGTDEAGR…NPVKRLLANL (187 aa)). The a divalent metal cation site is built by aspartate 6, glutamate 7, and aspartate 98.

This sequence belongs to the RNase HII family. It depends on Mn(2+) as a cofactor. Mg(2+) serves as cofactor.

The protein localises to the cytoplasm. It catalyses the reaction Endonucleolytic cleavage to 5'-phosphomonoester.. In terms of biological role, endonuclease that specifically degrades the RNA of RNA-DNA hybrids. The chain is Ribonuclease HII from Idiomarina loihiensis (strain ATCC BAA-735 / DSM 15497 / L2-TR).